The sequence spans 377 residues: Circumsporozoite protein (377 aa).

Positions 1–22 (MKNFILLAVSSILLVDLFPTHC) are cleaved as a signal peptide. The disordered stretch occupies residues 51 to 294 (HVGQSASRGR…NNEGANAPNE (244 aa)). Residues 72-100 (DAKKKKDGKKAEPKNPRENKLKQPGDRAD) are compositionally biased toward basic and acidic residues. The segment at 80–88 (KKAEPKNPR) is required for the binding to heparan sulfate proteoglycans (HSPGs) on the surface of host hepatocytes. Positions 91-95 (KLKQP) are region I; contains the proteolytic cleavage site. Repeat copies occupy residues 95-103 (PGDRADGQP), 104-112 (AGDRADGQP), 113-121 (AGDRADGQP), 122-130 (AGDRADGQP), 131-139 (AGDRAAGQP), 140-148 (AGDRADGQP), 149-157 (AGDRADGQP), 158-166 (AGDRADGQP), 167-175 (AGDRADGQP), 176-184 (AGDRAAGQP), 185-193 (AGDRAAGQP), 194-202 (AGDRADGQP), 203-211 (AGDRAAGQP), 212-220 (AGDRADGQP), 221-229 (AGDRAAGQP), 230-238 (AGDRADGQP), 239-247 (AGDRAAGQP), 248-256 (AGDRAAGQP), 257-265 (AGDRAAGQA), and 266-274 (AGDRAAGQA). Residues 95–274 (PGDRADGQPA…AAGDRAAGQA (180 aa)) are 20 X 9 AA tandem repeats of [PA]-G-D-R-A-[DA]-G-Q-[PA]. Over residues 236-273 (GQPAGDRAAGQPAGDRAAGQPAGDRAAGQAAGDRAAGQ) the composition is skewed to low complexity. The segment covering 274-283 (AAGGNAGGQG) has biased composition (gly residues). A compositionally biased stretch (low complexity) spans 284–293 (QNNEGANAPN). The TSP type-1 domain maps to 303 to 355 (KVRATVGTEWTPCSVTCGVGVRVRRRVNAANKKPEDLTLNDLETDVCTMDKCA). 2 disulfide bridges follow: Cys315/Cys349 and Cys319/Cys354. Thr318 is a glycosylation site (O-linked (Fuc) threonine). A lipid anchor (GPI-anchor amidated cysteine) is attached at Cys354. Positions 355–377 (AGIFNVVSNSLGLVILLVLALFN) are cleaved as a propeptide — removed in mature form.

It belongs to the plasmodium circumsporozoite protein family. Post-translationally, during host cell invasion, proteolytically cleaved at the cell membrane in the region I by a papain-like cysteine protease of parasite origin. Cleavage is triggered by the sporozoite contact with highly sulfated heparan sulfate proteoglycans (HSPGs) present on the host hepatocyte cell surface. Cleavage exposes the TSP type-1 (TSR) domain and is required for productive invasion of host hepatocytes but not for adhesion to the host cell membrane. Cleavage is dispensable for sporozoite development in the oocyst, motility and for traversal of host and vector cells. O-glycosylated; maybe by POFUT2.

Its subcellular location is the cell membrane. The protein resides in the cytoplasm. In terms of biological role, essential sporozoite protein. In the mosquito vector, required for sporozoite development in the oocyst, migration through the vector hemolymph and entry into the vector salivary glands. In the vertebrate host, required for sporozoite migration through the host dermis and infection of host hepatocytes. Binds to highly sulfated heparan sulfate proteoglycans (HSPGs) on the surface of host hepatocytes. Functionally, in the vertebrate host, binds to highly sulfated heparan sulfate proteoglycans (HSPGs) on the surface of host hepatocytes and is required for sporozoite invasion of the host hepatocytes. This is Circumsporozoite protein from Plasmodium vivax (strain Salvador I).